A 283-amino-acid chain; its full sequence is (+)-O-methylkolavelool synthase (283 aa).

S-adenosyl-L-methionine-binding positions include Gln106, 129 to 130, and His151; that span reads NA.

The protein belongs to the methyltransferase superfamily.

It catalyses the reaction (+)-kolavelool + S-adenosyl-L-methionine = (+)-O-methylkolavelool + S-adenosyl-L-homocysteine + H(+). In terms of biological role, involved in the biosynthesis of the diterpene (+)-O-methylkolavelool. Catalyzes the transfer of a methyl group from S-adenosyl-L-methionine to the hydroxy group of (+)-kolavelool, forming (+)-O-methylkolavelool. In Herpetosiphon aurantiacus (strain ATCC 23779 / DSM 785 / 114-95), this protein is (+)-O-methylkolavelool synthase.